A 75-amino-acid chain; its full sequence is DNA-directed RNA polymerase subunit epsilon (75 aa).

The protein belongs to the RNA polymerase subunit epsilon family. In terms of assembly, RNAP is composed of a core of 2 alpha, a beta and a beta' subunit. The core is associated with a delta subunit, and at least one of epsilon or omega. When a sigma factor is associated with the core the holoenzyme is formed, which can initiate transcription.

It catalyses the reaction RNA(n) + a ribonucleoside 5'-triphosphate = RNA(n+1) + diphosphate. In terms of biological role, a non-essential component of RNA polymerase (RNAP). In Lactobacillus johnsonii (strain CNCM I-12250 / La1 / NCC 533), this protein is DNA-directed RNA polymerase subunit epsilon.